Here is a 293-residue protein sequence, read N- to C-terminus: N-acetylneuraminate lyase (293 aa).

Ser47 and Thr48 together coordinate aceneuramate. The active-site Proton donor is Tyr136. Lys164 acts as the Schiff-base intermediate with substrate in catalysis. Aceneuramate is bound by residues Thr166, Gly188, Asp190, Glu191, and Ser207.

It belongs to the DapA family. NanA subfamily. Homotetramer.

It is found in the cytoplasm. The enzyme catalyses aceneuramate = aldehydo-N-acetyl-D-mannosamine + pyruvate. It participates in amino-sugar metabolism; N-acetylneuraminate degradation; D-fructose 6-phosphate from N-acetylneuraminate: step 1/5. Its function is as follows. Catalyzes the reversible aldol cleavage of N-acetylneuraminic acid (sialic acid; Neu5Ac) to form pyruvate and N-acetylmannosamine (ManNAc) via a Schiff base intermediate. This chain is N-acetylneuraminate lyase, found in Haemophilus influenzae (strain ATCC 51907 / DSM 11121 / KW20 / Rd).